A 232-amino-acid polypeptide reads, in one-letter code: MSATKMNAQEIIKFIADAKKKTPVKVTFNGELHGTIPWSVVKLGNVLFGDWEEIKPLLVNLEENKTYVVEQDARNSAVPLLDKRDINARIEPGAIIRDQVEIGDNAVIMMGAVINIGAEIGAGTMIDMGAILGGRAIVGKNSHVGAGAVLAGVIEPASAEPVRVGDNVLIGANAVVIEGVQIGSGSVVAAGAIVTQDVPENVVVAGVPARIIKTIDEKTQQKTALEDALRTL.

It belongs to the transferase hexapeptide repeat family. DapH subfamily.

It catalyses the reaction (S)-2,3,4,5-tetrahydrodipicolinate + acetyl-CoA + H2O = L-2-acetamido-6-oxoheptanedioate + CoA. It participates in amino-acid biosynthesis; L-lysine biosynthesis via DAP pathway; LL-2,6-diaminopimelate from (S)-tetrahydrodipicolinate (acetylase route): step 1/3. Catalyzes the transfer of an acetyl group from acetyl-CoA to tetrahydrodipicolinate. In Streptococcus gordonii (strain Challis / ATCC 35105 / BCRC 15272 / CH1 / DL1 / V288), this protein is 2,3,4,5-tetrahydropyridine-2,6-dicarboxylate N-acetyltransferase.